Here is a 74-residue protein sequence, read N- to C-terminus: Defensin Lc-def (74 aa).

Positions Met1 to Ala27 are cleaved as a signal peptide. Cystine bridges form between Cys30-Cys74, Cys41-Cys62, Cys47-Cys68, and Cys51-Cys70.

The protein localises to the secreted. Its function is as follows. Has antifungal activity against the phytopathogenic fungus A.niger VKM F-2259, but not against A.alternata VKM F-3047. Does not inhibit trypsin or chymotrypsin. In Lens culinaris subsp. culinaris (Cultivated lentil), this protein is Defensin Lc-def.